The sequence spans 96 residues: Transcription and mRNA export factor SUS1 (96 aa).

Lys68 is covalently cross-linked (Glycyl lysine isopeptide (Lys-Gly) (interchain with G-Cter in ubiquitin)).

It belongs to the ENY2 family. In terms of assembly, component of the nuclear pore complex (NPC)-associated TREX-2 complex (transcription and export complex 2), composed of at least SUS1, SAC3, THP1, SEM1, and CDC31. TREX-2 contains 2 SUS1 chains. The TREX-2 complex interacts with the nucleoporin NUP1. Component of the 1.8 MDa SAGA transcription coactivator-HAT complex. SAGA is built of 5 distinct domains with specialized functions. Within the SAGA complex, SUS1, SGF11, SGF73 and UBP8 form an additional subcomplex of SAGA called the DUB module (deubiquitination module). Interacts directly with THP1, SAC3, SGF11, and with the RNA polymerase II.

It is found in the nucleus. The protein localises to the nucleoplasm. The protein resides in the cytoplasm. It localises to the P-body. Its function is as follows. Involved in mRNA export coupled transcription activation by association with both the TREX-2 and the SAGA complexes. At the promoters, SAGA is required for recruitment of the basal transcription machinery. It influences RNA polymerase II transcriptional activity through different activities such as TBP interaction and promoter selectivity, interaction with transcription activators, and chromatin modification through histone acetylation and deubiquitination. Within the SAGA complex, participates in a subcomplex required for deubiquitination of H2B and for the maintenance of steady-state H3 methylation levels. The TREX-2 complex functions in docking export-competent ribonucleoprotein particles (mRNPs) to the nuclear entrance of the nuclear pore complex (nuclear basket). TREX-2 participates in mRNA export and accurate chromatin positioning in the nucleus by tethering genes to the nuclear periphery. May also be involved in cytoplasmic mRNA decay by interaction with components of P-bodies. The sequence is that of Transcription and mRNA export factor SUS1 from Saccharomyces cerevisiae (strain YJM789) (Baker's yeast).